The following is an 86-amino-acid chain: Toxin CSTX-20 (86 aa).

As to expression, expressed by the venom gland.

Its subcellular location is the secreted. The sequence is that of Toxin CSTX-20 from Cupiennius salei (American wandering spider).